We begin with the raw amino-acid sequence, 235 residues long: Tetraspanin-8 (235 aa).

Residues 1-12 (MAGVSSCLKYSM) lie on the Cytoplasmic side of the membrane. Residues 13–33 (FFFNFLFWVCGTLILGLAIWV) form a helical membrane-spanning segment. Residues 34 to 52 (RVSKDGKEIITSGDSSTNP) lie on the Extracellular side of the membrane. The chain crosses the membrane as a helical span at residues 53–73 (FIAVNILIAVGSIIMVLGFLG). Residues 74-84 (CCGAVKESRCM) are Cytoplasmic-facing. Residues 85–105 (LLLFFIGLLLILILQVAAGIL) form a helical membrane-spanning segment. At 106-203 (GAAFKPEYNR…SLIKDLFEKN (98 aa)) the chain is on the extracellular side. N-linked (GlcNAc...) asparagine glycosylation occurs at Asn-118. Residues 204–224 (IIIVIGIAFGLAVIEILGLVF) traverse the membrane as a helical segment. Topologically, residues 225–235 (SMVLYCQIGSK) are cytoplasmic.

Belongs to the tetraspanin (TM4SF) family. In terms of assembly, forms homooligomers. Interacts with MEP1B. Interacts with integrin alpha3/ITGA3. Interacts with RICTOR and MTOR. Interacts with ADAM17. Interacts with ECE1.

It localises to the cell membrane. Its function is as follows. Structural component of specialized membrane microdomains known as tetraspanin-enriched microdomains (TERMs), which act as platforms for receptor clustering and signaling. Participates thereby in diverse biological functions such as cell signal transduction, migration and protein trafficking. Promotes ADAM17-mediated TNF-alpha processing through recruitment of ADAM17 to tetraspanin-enriched micro-domains (TEMs). Forms a complex with RICTOR and integrin alpha3/ITGA3 to mediate mTORC2 activation and AKT1 phosphorylation leading to cell migration. Reduces apoptosis and autophagy induced by high glucose levels through forming a complex with mTOR and RICTOR. Contributes to the maintenance of intestinal epithelial barrier and plays a role in the regulation of intestine inflammation by switching interferon gamma receptor 1/IFNGR1 from clathrin-dependent to lipid raft-dependent endocytosis route to limit STAT1 activation magnitude and duration. Acts as a modulator of the endothelin axis by associating with endothelin converting enzyme ECE1 and regulating its activity of conversion of the endothelin-1 precursor to endothelin. The protein is Tetraspanin-8 (Tspan8) of Mus musculus (Mouse).